Here is a 720-residue protein sequence, read N- to C-terminus: Protein unc-112 (720 aa).

2 disordered regions span residues 145–170 (DLRR…ESVG) and 210–236 (MGTL…TMRR). An FERM domain is found at 288–614 (WLDSSRSLME…ALPEHGIHYF (327 aa)). A PH domain is found at 402 to 507 (VPELADYLKY…WMAACRLASR (106 aa)).

It belongs to the kindlin family. Interacts with pat-4/ILK. Probably forms a complex with pat-4 and pat-6. Component of an integrin containing attachment complex, composed of at least pat-2, pat-3, pat-4, pat-6, unc-52, unc-97 and unc-112. Mainly expressed in muscle cells in both embryos and adults.

It localises to the cell membrane. The protein localises to the cytoplasm. It is found in the myofibril. Its subcellular location is the sarcomere. The protein resides in the m line. Functionally, component of an integrin containing attachment complex, which is required for muscle development and maintenance. Probable regulator of cell-extracellular matrix adhesion. Required during initial muscle assembly to form dense bodies and M-lines. This is Protein unc-112 from Caenorhabditis elegans.